A 157-amino-acid chain; its full sequence is Endoribonuclease YbeY (157 aa).

Zn(2+) is bound by residues histidine 114, histidine 118, and histidine 124.

The protein belongs to the endoribonuclease YbeY family. Zn(2+) is required as a cofactor.

It is found in the cytoplasm. Single strand-specific metallo-endoribonuclease involved in late-stage 70S ribosome quality control and in maturation of the 3' terminus of the 16S rRNA. The chain is Endoribonuclease YbeY from Yersinia pseudotuberculosis serotype O:1b (strain IP 31758).